The following is an 845-amino-acid chain: Matrin-3 (845 aa).

Residue Ser2 is modified to N-acetylserine. Lys3 bears the N6-acetyllysine; alternate mark. Lys3 participates in a covalent cross-link: Glycyl lysine isopeptide (Lys-Gly) (interchain with G-Cter in SUMO2); alternate. Residues Ser4, Ser9, Ser14, Ser22, Ser41, Ser118, and Ser126 each carry the phosphoserine modification. Residues Lys132 and Lys146 each participate in a glycyl lysine isopeptide (Lys-Gly) (interchain with G-Cter in SUMO2) cross-link. Disordered regions lie at residues 147–174 (RRRT…YRVP) and 187–213 (DSFD…ESGY). The residue at position 150 (Thr150) is a Phosphothreonine. Ser157 carries the post-translational modification Phosphoserine. Tyr158 carries the phosphotyrosine modification. Residues 160-174 (RDGRSATREPPYRVP) are compositionally biased toward basic and acidic residues. Ser164, Ser188, and Ser195 each carry phosphoserine. Residues 201–213 (DYDHGSRSQESGY) are compositionally biased toward basic and acidic residues. Phosphotyrosine is present on Tyr202. Ser206, Ser208, and Ser211 each carry phosphoserine. Tyr219 is subject to Phosphotyrosine. Phosphoserine is present on Ser234. Residue Lys245 forms a Glycyl lysine isopeptide (Lys-Gly) (interchain with G-Cter in SUMO2) linkage. Ser264 carries the phosphoserine modification. Lys269 participates in a covalent cross-link: Glycyl lysine isopeptide (Lys-Gly) (interchain with G-Cter in SUMO2). At Ser275 the chain carries Phosphoserine. The segment at 342-394 (PFMLQQSTNPAPGILGPPPPSFHLGGPAVGPRGNLGAGNGNLQGPRHMQKGRV) is disordered. The RRM 1 domain maps to 398–473 (RVVHIMDFQR…KPVRVHLSQK (76 aa)). Glycyl lysine isopeptide (Lys-Gly) (interchain with G-Cter in SUMO2) cross-links involve residues Lys478, Lys487, and Lys491. The RRM 2 domain occupies 496–571 (RVIHLSNLPH…RCVKVDLSEK (76 aa)). Phosphoserine occurs at positions 509 and 511. Residue Lys515 forms a Glycyl lysine isopeptide (Lys-Gly) (interchain with G-Cter in SUMO2) linkage. Lys522 bears the N6-acetyllysine; alternate mark. A Glycyl lysine isopeptide (Lys-Gly) (interchain with G-Cter in SUMO2); alternate cross-link involves residue Lys522. A Phosphoserine modification is found at Ser533. Residues Lys554 and Lys555 each participate in a glycyl lysine isopeptide (Lys-Gly) (interchain with G-Cter in SUMO2) cross-link. Lys571 bears the N6-acetyllysine mark. A disordered region spans residues 588–785 (KKDKSRKRSY…EYRIGPYQPN (198 aa)). Residues Ser596, Ser598, Ser604, and Ser606 each carry the phosphoserine modification. Over residues 600–643 (DGKESPSDKKSKTDGAQKTENPAEGKEQEEKSGEDGEKDTKDDQ) the composition is skewed to basic and acidic residues. Residues Lys617 and Lys630 each participate in a glycyl lysine isopeptide (Lys-Gly) (interchain with G-Cter in SUMO2) cross-link. Positions 653-665 (ESEDELLVDEEEA) are enriched in acidic residues. Phosphoserine is present on residues Ser654, Ser671, Ser673, and Ser674. Thr679 is modified (phosphothreonine). Ser689 is subject to Phosphoserine. A compositionally biased stretch (basic and acidic residues) spans 689 to 704 (SDGKKEPSDKAVKKDA). Residues 708–716 (SKKKLKKVD) carry the Nuclear localization signal motif. Glycyl lysine isopeptide (Lys-Gly) (interchain with G-Cter in SUMO2) cross-links involve residues Lys717 and Lys734. Thr739 is modified (phosphothreonine). Residues Ser745, Ser757, and Ser760 each carry the phosphoserine modification. The span at 765 to 778 (DENKEDYTIPDEYR) shows a compositional bias: basic and acidic residues. Lys768 participates in a covalent cross-link: Glycyl lysine isopeptide (Lys-Gly) (interchain with G-Cter in SUMO2). A Matrin-type zinc finger spans residues 799 to 830 (FYCKLCSLFYTNEEVAKNTHCSSLPHYQKLKK). At Lys834 the chain carries N6-acetyllysine; alternate. A Glycyl lysine isopeptide (Lys-Gly) (interchain with G-Cter in SUMO2); alternate cross-link involves residue Lys834.

In terms of assembly, part of a complex consisting of SFPQ, NONO and MATR3. Interacts with AGO1 and AGO2. Part of a complex composed at least of ASH2L, EMSY, HCFC1, HSPA8, CCAR2, MATR3, MKI67, RBBP5, TUBB2A, WDR5 and ZNF335; this complex may have a histone H3-specific methyltransferase activity. Interacts with TARDBP. Part of the HDP-RNP complex composed of at least HEXIM1, PRKDC, XRCC5, XRCC6, paraspeckle proteins (SFPQ, NONO, PSPC1, RBM14, and MATR3) and NEAT1 RNA. Interacts with FUS. Interacts with IGF2BP1. Interacts with IGF2BP2 and IGF2BP3. Interacts with RBPMS.

It localises to the nucleus matrix. Its function is as follows. May play a role in transcription or may interact with other nuclear matrix proteins to form the internal fibrogranular network. In association with the SFPQ-NONO heteromer may play a role in nuclear retention of defective RNAs. Plays a role in the regulation of DNA virus-mediated innate immune response by assembling into the HDP-RNP complex, a complex that serves as a platform for IRF3 phosphorylation and subsequent innate immune response activation through the cGAS-STING pathway. Binds to N6-methyladenosine (m6A)-containing mRNAs and contributes to MYC stability by binding to m6A-containing MYC mRNAs. May bind to specific miRNA hairpins. In Rattus norvegicus (Rat), this protein is Matrin-3 (Matr3).